The sequence spans 735 residues: 1,4-alpha-glucan branching enzyme GlgB 1 (735 aa).

Asp418 acts as the Nucleophile in catalysis. Glu471 serves as the catalytic Proton donor.

This sequence belongs to the glycosyl hydrolase 13 family. GlgB subfamily. As to quaternary structure, monomer.

The enzyme catalyses Transfers a segment of a (1-&gt;4)-alpha-D-glucan chain to a primary hydroxy group in a similar glucan chain.. The protein operates within glycan biosynthesis; glycogen biosynthesis. In terms of biological role, catalyzes the formation of the alpha-1,6-glucosidic linkages in glycogen by scission of a 1,4-alpha-linked oligosaccharide from growing alpha-1,4-glucan chains and the subsequent attachment of the oligosaccharide to the alpha-1,6 position. In Rhizobium etli (strain ATCC 51251 / DSM 11541 / JCM 21823 / NBRC 15573 / CFN 42), this protein is 1,4-alpha-glucan branching enzyme GlgB 1.